Here is a 142-residue protein sequence, read N- to C-terminus: Hemoglobin subunit alpha (142 aa).

The Globin domain maps to 2–142 (VLSPADKTNV…VSTVLTSKYR (141 aa)). Residue serine 4 is modified to Phosphoserine. Residue lysine 8 is modified to N6-succinyllysine. Position 9 is a phosphothreonine (threonine 9). Lysine 12 is modified (N6-succinyllysine). The residue at position 17 (lysine 17) is an N6-acetyllysine; alternate. Position 17 is an N6-succinyllysine; alternate (lysine 17). Tyrosine 25 carries the post-translational modification Phosphotyrosine. Serine 36 carries the phosphoserine modification. Lysine 41 carries the post-translational modification N6-succinyllysine. Serine 50 bears the Phosphoserine mark. An O2-binding site is contributed by histidine 59. A heme b-binding site is contributed by histidine 88. Serine 103 carries the phosphoserine modification. Phosphothreonine is present on threonine 109. 2 positions are modified to phosphoserine: serine 125 and serine 132. Phosphothreonine is present on residues threonine 135 and threonine 138. Serine 139 bears the Phosphoserine mark.

Belongs to the globin family. In terms of assembly, heterotetramer of two alpha chains and two beta chains. As to expression, red blood cells.

Functionally, involved in oxygen transport from the lung to the various peripheral tissues. Its function is as follows. Hemopressin acts as an antagonist peptide of the cannabinoid receptor CNR1. Hemopressin-binding efficiently blocks cannabinoid receptor CNR1 and subsequent signaling. The protein is Hemoglobin subunit alpha (HBA) of Piliocolobus badius (Western red colobus).